Consider the following 729-residue polypeptide: Elongation factor 2 (729 aa).

In terms of domain architecture, tr-type G spans 19-262 (EQIRNIAIAA…MVCEHFPNPI (244 aa)). GTP is bound by residues 28 to 35 (AHVDHGKT), 94 to 98 (DTPGH), and 148 to 151 (NKVD). Diphthamide is present on histidine 597.

This sequence belongs to the TRAFAC class translation factor GTPase superfamily. Classic translation factor GTPase family. EF-G/EF-2 subfamily.

Its subcellular location is the cytoplasm. In terms of biological role, catalyzes the GTP-dependent ribosomal translocation step during translation elongation. During this step, the ribosome changes from the pre-translocational (PRE) to the post-translocational (POST) state as the newly formed A-site-bound peptidyl-tRNA and P-site-bound deacylated tRNA move to the P and E sites, respectively. Catalyzes the coordinated movement of the two tRNA molecules, the mRNA and conformational changes in the ribosome. The polypeptide is Elongation factor 2 (Halomicrobium mukohataei (strain ATCC 700874 / DSM 12286 / JCM 9738 / NCIMB 13541) (Haloarcula mukohataei)).